A 605-amino-acid chain; its full sequence is MGCCTLGLFADSVEKRAAKDVFTEPARFYPSQKSTLESARSDTSESENASSSVPSHSQQELAPDSAAPARNSVLSPAPPERREKQGTAVHGAEVTRAGAVSPRFVGGLTKILAASDHTFFAAGNDGFLTQYTYPDYKPDTWQITPVSIKHCAVHPDRARIAVYETDGRNYHRVSVWNWRTKEILFAKRFTASVVSLSWIVQGSFLSVGTASREGVTVLDGSGNTVSLFSEEPGVVLLTASGPRLVLSYAESGRLTYVDYSKKTTVKRLLTEKNLLSPMLIHNGAHLVGYRDQRVYVIQSSSGAVLTEYPARSACFAHTFSDSLPVWIEPAELKYHWRIRKAAQRSADFMLPDNARITSACSVRTRVIVGTDRGILYELQQGDDRRVTIRALNGERQIYASDVHGADEGAYFLADGSLYHSMASGGPYRVLVRGVKGTRFLPYRDGFIVWSAGKETEFLHCAQKTSQHRMIYRARSTVSGVSVYGRMLVITEPFSGVSVVDIERGIRVFFHKAIGMQDSLLITDDVIVATQSGLQPLVLLHMRTGETYTQRWEAICLGVRAHDTQHVYFFSLDTNAGTTDLIHFVCNCSNPQKVLCDASSLIRMRI.

The interval 22–93 (FTEPARFYPS…KQGTAVHGAE (72 aa)) is disordered. Over residues 46 to 57 (SENASSSVPSHS) the composition is skewed to low complexity.

This is an uncharacterized protein from Treponema pallidum (strain Nichols).